Consider the following 70-residue polypeptide: DNA-directed RNA polymerase subunit omega (70 aa).

This sequence belongs to the RNA polymerase subunit omega family. In terms of assembly, the RNAP catalytic core consists of 2 alpha, 1 beta, 1 beta' and 1 omega subunit. When a sigma factor is associated with the core the holoenzyme is formed, which can initiate transcription.

The catalysed reaction is RNA(n) + a ribonucleoside 5'-triphosphate = RNA(n+1) + diphosphate. Promotes RNA polymerase assembly. Latches the N- and C-terminal regions of the beta' subunit thereby facilitating its interaction with the beta and alpha subunits. The protein is DNA-directed RNA polymerase subunit omega of Clostridium perfringens (strain ATCC 13124 / DSM 756 / JCM 1290 / NCIMB 6125 / NCTC 8237 / Type A).